Reading from the N-terminus, the 70-residue chain is Small ribosomal subunit protein bS21 (70 aa).

This sequence belongs to the bacterial ribosomal protein bS21 family.

The protein is Small ribosomal subunit protein bS21 of Polynucleobacter asymbioticus (strain DSM 18221 / CIP 109841 / QLW-P1DMWA-1) (Polynucleobacter necessarius subsp. asymbioticus).